The primary structure comprises 475 residues: Phenolic acid decarboxylase (475 aa).

The Mn(2+) site is built by Asn161, His183, and Glu225. Prenylated FMN is bound by residues 161 to 166 (NVGIYR) and 182 to 183 (MH). The active-site Proton donor is the Glu274.

This sequence belongs to the UbiD family. YclC subfamily. Prenylated FMN is required as a cofactor. Requires Mn(2+) as cofactor.

The enzyme catalyses 4-hydroxybenzoate + H(+) = phenol + CO2. The catalysed reaction is vanillate + H(+) = guaiacol + CO2. Involved in the non-oxidative decarboxylation and detoxification of phenolic derivatives under both aerobic and anaerobic conditions. Phenolic acid decarboxylase that catalyzes the reversible decarboxylation of 4-hydroxybenzoate and vanillate. The polypeptide is Phenolic acid decarboxylase (Escherichia coli O157:H7).